A 336-amino-acid polypeptide reads, in one-letter code: Biotin synthase (336 aa).

A Radical SAM core domain is found at 48-277; the sequence is VFGDEVEFCS…QAELRLCGGR (230 aa). Residues Cys-66, Cys-70, and Cys-73 each coordinate [4Fe-4S] cluster. 4 residues coordinate [2Fe-2S] cluster: Cys-110, Cys-142, Cys-202, and Arg-272.

This sequence belongs to the radical SAM superfamily. Biotin synthase family. As to quaternary structure, homodimer. The cofactor is [4Fe-4S] cluster. [2Fe-2S] cluster is required as a cofactor.

It catalyses the reaction (4R,5S)-dethiobiotin + (sulfur carrier)-SH + 2 reduced [2Fe-2S]-[ferredoxin] + 2 S-adenosyl-L-methionine = (sulfur carrier)-H + biotin + 2 5'-deoxyadenosine + 2 L-methionine + 2 oxidized [2Fe-2S]-[ferredoxin]. Its pathway is cofactor biosynthesis; biotin biosynthesis; biotin from 7,8-diaminononanoate: step 2/2. Catalyzes the conversion of dethiobiotin (DTB) to biotin by the insertion of a sulfur atom into dethiobiotin via a radical-based mechanism. This chain is Biotin synthase, found in Persephonella marina (strain DSM 14350 / EX-H1).